The sequence spans 190 residues: MSRLRRFNRKILSLSSDYTHDGESDQEDVSILPLDTEEQEELIQKFETNAHITNKLYINLLSILYLLYGGLLMILVRKSRGYIKLALLAGANSLICSCITLRYDIVNDYLLFKKFKLRVSNFSINIINIILLVLMAWISFNHVVEDKKTVLCLQVPMFLFWVAVLVKRWARNIEDEIADLRCLKYKYKNA.

The Cytoplasmic segment spans residues 1-55 (MSRLRRFNRKILSLSSDYTHDGESDQEDVSILPLDTEEQEELIQKFETNAHITNK). The chain crosses the membrane as a helical span at residues 56-76 (LYINLLSILYLLYGGLLMILV). Over 77-80 (RKSR) the chain is Extracellular. Residues 81–101 (GYIKLALLAGANSLICSCITL) form a helical membrane-spanning segment. Residues 102–123 (RYDIVNDYLLFKKFKLRVSNFS) lie on the Cytoplasmic side of the membrane. Residues 124-144 (INIINIILLVLMAWISFNHVV) traverse the membrane as a helical segment. Residues 145 to 149 (EDKKT) lie on the Extracellular side of the membrane. A helical membrane pass occupies residues 150–170 (VLCLQVPMFLFWVAVLVKRWA). The Cytoplasmic portion of the chain corresponds to 171–190 (RNIEDEIADLRCLKYKYKNA).

The protein localises to the membrane. This is an uncharacterized protein from Saccharomyces cerevisiae (strain ATCC 204508 / S288c) (Baker's yeast).